Here is a 97-residue protein sequence, read N- to C-terminus: Small integral membrane protein 8 (97 aa).

The segment at 1 to 22 is disordered; sequence MSSAPEPPAFKKEPPKEKDLGN. Positions 9–20 are enriched in basic and acidic residues; sequence AFKKEPPKEKDL. The chain crosses the membrane as a helical span at residues 48 to 70; it reads PVMAFGLITISLCVAYIGYLHAT.

The protein belongs to the SMIM8 family.

It is found in the membrane. This chain is Small integral membrane protein 8 (SMIM8), found in Bos taurus (Bovine).